A 455-amino-acid polypeptide reads, in one-letter code: UDP-N-acetylmuramoylalanine--D-glutamate ligase (455 aa).

Position 120 to 126 (120 to 126) interacts with ATP; that stretch reads GSNGKTT.

It belongs to the MurCDEF family.

Its subcellular location is the cytoplasm. It carries out the reaction UDP-N-acetyl-alpha-D-muramoyl-L-alanine + D-glutamate + ATP = UDP-N-acetyl-alpha-D-muramoyl-L-alanyl-D-glutamate + ADP + phosphate + H(+). The protein operates within cell wall biogenesis; peptidoglycan biosynthesis. Its function is as follows. Cell wall formation. Catalyzes the addition of glutamate to the nucleotide precursor UDP-N-acetylmuramoyl-L-alanine (UMA). The polypeptide is UDP-N-acetylmuramoylalanine--D-glutamate ligase (Pediococcus pentosaceus (strain ATCC 25745 / CCUG 21536 / LMG 10740 / 183-1w)).